Reading from the N-terminus, the 1331-residue chain is Retrotransposon-like protein 1 (1331 aa).

4 disordered regions span residues 1-123, 128-147, 556-595, and 971-1033; these read MMEP…SQED, TDLA…SSTV, EADE…ETFY, and PSSE…DEPN. Positions 19-30 are enriched in low complexity; sequence SSKQMESSEGSS. 3 stretches are compositionally biased toward acidic residues: residues 109-123, 128-143, and 569-578; these read EMEE…SQED, TDLA…EEPD, and GSDDLSESEP. A compositionally biased stretch (low complexity) spans 992-1001; it reads RRVATTTRPT. Over residues 1015–1024 the composition is skewed to acidic residues; that stretch reads PESEDEEESE. 2 helical membrane passes run 1070–1090 and 1117–1137; these read FYRS…LVML and LFLD…TQLF. The disordered stretch occupies residues 1309–1331; the sequence is SPPREGATLEELPSDADEDAGLD. A compositionally biased stretch (acidic residues) spans 1320-1331; sequence LPSDADEDAGLD.

The protein localises to the membrane. In terms of biological role, plays an essential role in capillaries endothelial cells for the maintenance of feto-maternal interface and for development of the placenta. The sequence is that of Retrotransposon-like protein 1 (RTL1) from Bos taurus (Bovine).